The following is a 485-amino-acid chain: Aspartyl/glutamyl-tRNA(Asn/Gln) amidotransferase subunit B (485 aa).

This sequence belongs to the GatB/GatE family. GatB subfamily. In terms of assembly, heterotrimer of A, B and C subunits.

The enzyme catalyses L-glutamyl-tRNA(Gln) + L-glutamine + ATP + H2O = L-glutaminyl-tRNA(Gln) + L-glutamate + ADP + phosphate + H(+). It carries out the reaction L-aspartyl-tRNA(Asn) + L-glutamine + ATP + H2O = L-asparaginyl-tRNA(Asn) + L-glutamate + ADP + phosphate + 2 H(+). Allows the formation of correctly charged Asn-tRNA(Asn) or Gln-tRNA(Gln) through the transamidation of misacylated Asp-tRNA(Asn) or Glu-tRNA(Gln) in organisms which lack either or both of asparaginyl-tRNA or glutaminyl-tRNA synthetases. The reaction takes place in the presence of glutamine and ATP through an activated phospho-Asp-tRNA(Asn) or phospho-Glu-tRNA(Gln). The polypeptide is Aspartyl/glutamyl-tRNA(Asn/Gln) amidotransferase subunit B (Bordetella avium (strain 197N)).